A 334-amino-acid chain; its full sequence is Succinylglutamate desuccinylase (334 aa).

Zn(2+)-binding residues include His59, Glu62, and His151. Glu215 is an active-site residue.

The protein belongs to the AspA/AstE family. Succinylglutamate desuccinylase subfamily. Requires Zn(2+) as cofactor.

The catalysed reaction is N-succinyl-L-glutamate + H2O = L-glutamate + succinate. It functions in the pathway amino-acid degradation; L-arginine degradation via AST pathway; L-glutamate and succinate from L-arginine: step 5/5. Its function is as follows. Transforms N(2)-succinylglutamate into succinate and glutamate. The protein is Succinylglutamate desuccinylase of Pseudomonas fluorescens (strain SBW25).